Here is a 205-residue protein sequence, read N- to C-terminus: Ras-related protein rab-6.2 (205 aa).

GTP-binding positions include 18–25 (EQSVGKTS), threonine 42, 66–70 (TAGQE), and 124–127 (KTDL). S-geranylgeranyl cysteine attachment occurs at residues cysteine 203 and cysteine 205. Position 205 is a cysteine methyl ester (cysteine 205).

The protein belongs to the small GTPase superfamily. Rab family. As to quaternary structure, interacts with GARP complex component vps-52. Interacts (in GTP-bound form) with lin-10. May interact (in GTP-bound form) with eat-17. Highly expressed in body wall muscles, pharyngeal and vulval muscles, hypodermis, intestine, the gonad, coelomocytes, and neurons, including command interneuron (at protein level). Highly expressed in the terminal bulb muscles.

The protein localises to the perikaryon. It localises to the cell projection. The protein resides in the dendrite. Its subcellular location is the golgi apparatus. It is found in the cytoplasmic vesicle. The small GTPases Rab are key regulators of intracellular membrane trafficking, from the formation of transport vesicles to their fusion with membranes. Rabs cycle between an inactive GDP-bound form and an active GTP-bound form that is able to recruit to membranes different set of downstream effectors directly responsible for vesicle formation, movement, tethering and fusion. In its active GTP-bound form, acts redundantly with rab-6.1 (in its active GTP-bound form) to positively regulate the retrograde trafficking of cargo molecules from endosomes to the Golgi compartment. Required for the retrograde trafficking of glr-1, a subunit of AMPA-type glutamate receptors (AMPRs), out of early endosomes and into the Golgi compartment in neurons. Its role in glr-1 trafficking may partly be mediated by its interaction with lin-10 and association with components of the retromer complex such as rme-8. Together with rab-6.2, promotes the retrograde trafficking of mig-14 from endosomes to Golgi structures in the intestine. Plays a role in the epidermis to promote cuticle integrity and impermeability of the cuticle barrier to exogenous molecules. May have a role in the glycosylation of the cuticular surface. Required for seam cell division and alae formation. Required for grinder formation, which is the feeding organ that breaks down food. In contrast to rab-6.1, may play a minor role in the exocytosis of secretory vesicles (cortical granules) during the oocyte-to-embryo transition. The sequence is that of Ras-related protein rab-6.2 from Caenorhabditis elegans.